We begin with the raw amino-acid sequence, 388 residues long: Succinate--CoA ligase [ADP-forming] subunit beta (388 aa).

Positions 9 to 244 (KQLFAEYGLP…PSQDDPREAH (236 aa)) constitute an ATP-grasp domain. Residues lysine 46, 53–55 (GRG), glutamate 99, threonine 102, and glutamate 107 each bind ATP. The Mg(2+) site is built by asparagine 199 and aspartate 213. Substrate contacts are provided by residues asparagine 264 and 321–323 (GIV).

Belongs to the succinate/malate CoA ligase beta subunit family. In terms of assembly, heterotetramer of two alpha and two beta subunits. Requires Mg(2+) as cofactor.

It catalyses the reaction succinate + ATP + CoA = succinyl-CoA + ADP + phosphate. It carries out the reaction GTP + succinate + CoA = succinyl-CoA + GDP + phosphate. It functions in the pathway carbohydrate metabolism; tricarboxylic acid cycle; succinate from succinyl-CoA (ligase route): step 1/1. Functionally, succinyl-CoA synthetase functions in the citric acid cycle (TCA), coupling the hydrolysis of succinyl-CoA to the synthesis of either ATP or GTP and thus represents the only step of substrate-level phosphorylation in the TCA. The beta subunit provides nucleotide specificity of the enzyme and binds the substrate succinate, while the binding sites for coenzyme A and phosphate are found in the alpha subunit. The polypeptide is Succinate--CoA ligase [ADP-forming] subunit beta (Pseudomonas putida (strain GB-1)).